A 702-amino-acid polypeptide reads, in one-letter code: Heparin-sulfate lyase (702 aa).

The first 17 residues, 1–17, serve as a signal peptide directing secretion; sequence MKNIFFICFCALFAFSG. The active-site Proton acceptor is the Tyr-314.

Belongs to the polysaccharide lyase 12 family.

It is found in the periplasm. The catalysed reaction is Elimination of sulfate, appears to act on linkages between N-acetyl-D-glucosamine and uronate. Product is an unsaturated sugar.. Specifically cleaves heparan sulfate-rich regions of acidic polysaccharides. Does not act on N,O-desulfated glucosamine or N-acetyl-O-sulfated glucosamine linkages. Functions in cleaving metazoan heparan sulfate and providing carbon, nitrogen and sulfate sources for microorganisms. This chain is Heparin-sulfate lyase (hepC), found in Bacteroides thetaiotaomicron (strain ATCC 29148 / DSM 2079 / JCM 5827 / CCUG 10774 / NCTC 10582 / VPI-5482 / E50).